A 311-amino-acid polypeptide reads, in one-letter code: Porphobilinogen deaminase (311 aa).

S-(dipyrrolylmethanemethyl)cysteine is present on C241.

This sequence belongs to the HMBS family. In terms of assembly, monomer. Requires dipyrromethane as cofactor.

The enzyme catalyses 4 porphobilinogen + H2O = hydroxymethylbilane + 4 NH4(+). It functions in the pathway porphyrin-containing compound metabolism; protoporphyrin-IX biosynthesis; coproporphyrinogen-III from 5-aminolevulinate: step 2/4. Its function is as follows. Tetrapolymerization of the monopyrrole PBG into the hydroxymethylbilane pre-uroporphyrinogen in several discrete steps. The chain is Porphobilinogen deaminase from Carboxydothermus hydrogenoformans (strain ATCC BAA-161 / DSM 6008 / Z-2901).